The sequence spans 107 residues: Probable antitoxin TacA (107 aa).

Belongs to the TacA antitoxin family. As to quaternary structure, forms a complex with cognate antitoxin TacT.

In terms of biological role, probable antitoxin component of a type II toxin-antitoxin (TA) system. Should neutralize cognate toxin TacT (y4aS). The protein is Probable antitoxin TacA of Sinorhizobium fredii (strain NBRC 101917 / NGR234).